A 155-amino-acid chain; its full sequence is 1,4-dihydroxy-2-naphthoyl-CoA hydrolase (155 aa).

Aspartate 22 is an active-site residue.

This sequence belongs to the 4-hydroxybenzoyl-CoA thioesterase family. DHNA-CoA hydrolase subfamily.

The enzyme catalyses 1,4-dihydroxy-2-naphthoyl-CoA + H2O = 1,4-dihydroxy-2-naphthoate + CoA + H(+). Its pathway is cofactor biosynthesis; phylloquinone biosynthesis. The protein operates within quinol/quinone metabolism; 1,4-dihydroxy-2-naphthoate biosynthesis; 1,4-dihydroxy-2-naphthoate from chorismate: step 7/7. Catalyzes the hydrolysis of 1,4-dihydroxy-2-naphthoyl-CoA (DHNA-CoA) to 1,4-dihydroxy-2-naphthoate (DHNA), a reaction involved in phylloquinone (vitamin K1) biosynthesis. This is 1,4-dihydroxy-2-naphthoyl-CoA hydrolase from Prochlorococcus marinus (strain SARG / CCMP1375 / SS120).